Reading from the N-terminus, the 425-residue chain is Paired box pox-neuro protein (425 aa).

A DNA-binding region (paired) is located at residues 5–132 (GQAGVNQLGG…SSINRILRNS (128 aa)). Positions 8 to 64 (GVNQLGGVFVNGRPLPDCVRRRIVDLALCGVRPCDISRQLLVSHGCVSKILTRFYET) are PAI subdomain. Positions 84–132 (TVVKKIIRLKEENSGMFAWEIREQLQQQRVCDPSSVPSISSINRILRNS) are RED subdomain. Disordered regions lie at residues 159-188 (QAGS…AATP), 297-358 (TKSE…RKRN), and 383-425 (LESS…EVVN). Residues 172–185 (APPPPVTVAPPTPA) are compositionally biased toward pro residues. Low complexity-rich tracts occupy residues 323–332 (SSPAALSLTA) and 340–349 (GSAPEASPGS). The span at 402–425 (TPEDEDPAEAEEEQEEEDSVEVVN) shows a compositional bias: acidic residues.

Central and peripheral nervous systems.

The protein localises to the nucleus. In terms of biological role, transcriptional regulator that specifies poly-innervated organs (chemosensory bristle). Also controls the number of neurons. The sequence is that of Paired box pox-neuro protein (Poxn) from Drosophila melanogaster (Fruit fly).